A 251-amino-acid chain; its full sequence is uncharacterized protein (251 aa).

Positions 1-19 (MRYLKRITIYISLLILVSG) are cleaved as a signal peptide. C20 carries N-palmitoyl cysteine lipidation. The S-diacylglycerol cysteine moiety is linked to residue C20.

Belongs to the staphylococcal tandem lipoprotein family.

It is found in the cell membrane. This is an uncharacterized protein from Staphylococcus epidermidis (strain ATCC 12228 / FDA PCI 1200).